A 147-amino-acid chain; its full sequence is Thyrotropin subunit beta (147 aa).

A signal peptide spans 1–20 (MELSVAMYGLLCLLFSQAVP). Disulfide bonds link C22/C72, C36/C87, C39/C127, C47/C103, C51/C105, and C108/C115. Residue N43 is glycosylated (N-linked (GlcNAc...) asparagine).

This sequence belongs to the glycoprotein hormones subunit beta family. In terms of assembly, heterodimer of a common alpha chain and a unique beta chain which confers biological specificity to thyrotropin, lutropin, follitropin and gonadotropin. Pituitary gland. Higher levels seen in immature fishes than the mature fishes.

The protein localises to the secreted. Indispensable for the control of thyroid structure and metabolism. May play some role in the biological processes of the immature fishes. This chain is Thyrotropin subunit beta (tshb), found in Oncorhynchus mykiss (Rainbow trout).